The following is a 107-amino-acid chain: Cell cycle protein GpsB (107 aa).

The stretch at 32 to 65 forms a coiled coil; the sequence is LDNVIQDYETYISEIEELKAEIERLKNQNTHPKS. Residues 57-80 form a disordered region; that stretch reads KNQNTHPKSPSTENRHAMVQPTRV. The segment covering 58–68 has biased composition (polar residues); it reads NQNTHPKSPST.

This sequence belongs to the GpsB family. In terms of assembly, forms polymers through the coiled coil domains. Interacts with PBP1, MreC and EzrA.

It localises to the cytoplasm. Divisome component that associates with the complex late in its assembly, after the Z-ring is formed, and is dependent on DivIC and PBP2B for its recruitment to the divisome. Together with EzrA, is a key component of the system that regulates PBP1 localization during cell cycle progression. Its main role could be the removal of PBP1 from the cell pole after pole maturation is completed. Also contributes to the recruitment of PBP1 to the division complex. Not essential for septum formation. This chain is Cell cycle protein GpsB, found in Streptococcus uberis (strain ATCC BAA-854 / 0140J).